The sequence spans 40 residues: Neutral phospholipase A2 homolog cannitoxin beta chain 2 (40 aa).

In terms of assembly, heterotrimer of alpha, beta, and gamma chains; non-covalently linked. Expressed by the venom gland.

It localises to the secreted. Heterotrimer: Snake venom phospholipase A2 (PLA2) heterotrimer that acts as a potent presynaptic neurotoxin by blocking synaptic transmission and synaptic vesicle recycling. Enzymatic activity is essential for the neurotoxic effects. May act by binding in a calcium-dependent fashion to neurotonal pentraxin-1 (NPTX1) and neurotonal pentraxin-2 (NPTX2), but not to neuronal pentraxin receptor (NPTXR). Also binds to taipoxin-associated calcium binding protein 49 (RCN2), a protein localized in the lumen of endoplasmic reticulum. Its function is as follows. Monomer (beta chain): Snake venom phospholipase A2 homolog that is neither toxic nor enzymatically active. Does not bind calcium. The chain is Neutral phospholipase A2 homolog cannitoxin beta chain 2 from Oxyuranus scutellatus canni (Papuan taipan).